The chain runs to 326 residues: tRNA-modifying protein YgfZ (326 aa).

W27 and W189 together coordinate folate.

It belongs to the tRNA-modifying YgfZ family.

The protein localises to the cytoplasm. Functionally, folate-binding protein involved in regulating the level of ATP-DnaA and in the modification of some tRNAs. It is probably a key factor in regulatory networks that act via tRNA modification, such as initiation of chromosomal replication. This chain is tRNA-modifying protein YgfZ, found in Salmonella schwarzengrund (strain CVM19633).